The primary structure comprises 274 residues: Pyrroline-5-carboxylate reductase 3 (274 aa).

Residue Ala2 is modified to N-acetylalanine.

It belongs to the pyrroline-5-carboxylate reductase family. In terms of assembly, homodecamer; composed of 5 homodimers.

It is found in the cytoplasm. The enzyme catalyses L-proline + NADP(+) = (S)-1-pyrroline-5-carboxylate + NADPH + 2 H(+). It catalyses the reaction L-proline + NAD(+) = (S)-1-pyrroline-5-carboxylate + NADH + 2 H(+). It participates in amino-acid biosynthesis; L-proline biosynthesis; L-proline from L-glutamate 5-semialdehyde: step 1/1. Its function is as follows. Oxidoreductase that catalyzes the last step in proline biosynthesis, which corresponds to the reduction of pyrroline-5-carboxylate (P5C) to L-proline using NAD(P)H. Proline is synthesized from either glutamate or ornithine; both are converted to P5C, and then to proline via pyrroline-5-carboxylate reductases (PYCRs). PYCR3 is exclusively linked to the biosynthesis of proline from ornithine. In Rattus norvegicus (Rat), this protein is Pyrroline-5-carboxylate reductase 3.